Consider the following 94-residue polypeptide: Small ribosomal subunit protein uS19 (94 aa).

The protein belongs to the universal ribosomal protein uS19 family.

In terms of biological role, protein S19 forms a complex with S13 that binds strongly to the 16S ribosomal RNA. The sequence is that of Small ribosomal subunit protein uS19 from Pelotomaculum thermopropionicum (strain DSM 13744 / JCM 10971 / SI).